The chain runs to 301 residues: ATP synthase gamma chain (301 aa).

It belongs to the ATPase gamma chain family. As to quaternary structure, F-type ATPases have 2 components, CF(1) - the catalytic core - and CF(0) - the membrane proton channel. CF(1) has five subunits: alpha(3), beta(3), gamma(1), delta(1), epsilon(1). CF(0) has three main subunits: a, b and c.

The protein resides in the cell inner membrane. Produces ATP from ADP in the presence of a proton gradient across the membrane. The gamma chain is believed to be important in regulating ATPase activity and the flow of protons through the CF(0) complex. This Bordetella bronchiseptica (strain ATCC BAA-588 / NCTC 13252 / RB50) (Alcaligenes bronchisepticus) protein is ATP synthase gamma chain.